The primary structure comprises 158 residues: Phosphopantetheine adenylyltransferase (158 aa).

Residue Thr-10 participates in substrate binding. ATP-binding positions include 10–11 (TF) and His-18. Lys-42, Leu-74, and Arg-88 together coordinate substrate. ATP contacts are provided by residues 89 to 91 (GLR), Glu-99, and 124 to 130 (YSFISSS).

This sequence belongs to the bacterial CoaD family. As to quaternary structure, homohexamer. It depends on Mg(2+) as a cofactor.

It localises to the cytoplasm. The catalysed reaction is (R)-4'-phosphopantetheine + ATP + H(+) = 3'-dephospho-CoA + diphosphate. Its pathway is cofactor biosynthesis; coenzyme A biosynthesis; CoA from (R)-pantothenate: step 4/5. Its function is as follows. Reversibly transfers an adenylyl group from ATP to 4'-phosphopantetheine, yielding dephospho-CoA (dPCoA) and pyrophosphate. The chain is Phosphopantetheine adenylyltransferase from Erwinia tasmaniensis (strain DSM 17950 / CFBP 7177 / CIP 109463 / NCPPB 4357 / Et1/99).